A 2809-amino-acid chain; its full sequence is Fibrillin-3 (2809 aa).

An N-terminal signal peptide occupies residues 1 to 31 (MTLEGLYLARGPLARLLLAWSALLCMAGGQG). Residues 32–48 (RWDGALEAAGPGRVRRR) constitute a propeptide that is removed on maturation. An EGF-like 1 domain is found at 147–179 (GQPICDRGCHNGGRCIGPNRCACVYGFMGPQCE). Disulfide bonds link Cys151-Cys161, Cys155-Cys167, and Cys169-Cys178. Residues 185–237 (GPCFGQVGPEGCQHQLTGLVCTKALCCATVGRAWGLPCELCPAQPHPCRRGFI) form the TB 1 domain. The 42-residue stretch at 247–288 (DVDECQAVPGLCQGGSCVNMVGSFHCRCPVGHRLSDSSAACE) folds into the EGF-like 2; calcium-binding domain. 3 disulfides stabilise this stretch: Cys251/Cys263, Cys258/Cys272, and Cys274/Cys287. Residues 293–346 (GACFSVLFGGRCAGDLAGHYTRRQCCCDRGRCWAAGPVPELCPPRGSNEFQQLC) enclose the TB 2 domain. Asn406 carries an N-linked (GlcNAc...) asparagine glycan. Residues 408-448 (TIDICRHFTNLCLNGRCLPTPSSYRCECNVGYTQDVRGECI) enclose the EGF-like 3 domain. Cystine bridges form between Cys412/Cys424, Cys419/Cys433, Cys435/Cys447, Cys453/Cys463, Cys458/Cys472, Cys474/Cys487, Cys493/Cys505, Cys500/Cys514, Cys516/Cys529, Cys535/Cys546, Cys541/Cys555, Cys557/Cys570, Cys576/Cys587, Cys582/Cys596, and Cys598/Cys611. An EGF-like 4; calcium-binding domain is found at 449–488 (DVDECTSSPCHHGDCVNIPGTYHCRCYPGFQATPTRQACV). In terms of domain architecture, EGF-like 5; calcium-binding spans 489 to 530 (DVDECIVSGGLCHLGRCVNTEGSFQCVCNAGFELSPDGKNCV). One can recognise an EGF-like 6; calcium-binding domain in the interval 531–571 (DHNECATSTMCVNGVCLNEDGSFSCLCKPGFLLAPGGHYCM). Residues 572-612 (DIDECQTPGICVNGHCTNTEGSFRCQCLGGLAVGTDGRVCV) form the EGF-like 7; calcium-binding domain. A TB 3 domain is found at 618-670 (STCYGAIEKGSCARPFPGTVTKSECCCANPDHGFGEPCQLCPAKDSAEFQALC). Residues 682–723 (DINECALDPEVCANGVCENLRGSYRCVCNLGYEAGASGKDCT) form the EGF-like 8; calcium-binding domain. 9 disulfide bridges follow: Cys686-Cys698, Cys693-Cys707, Cys709-Cys722, Cys728-Cys740, Cys735-Cys749, Cys751-Cys764, Cys770-Cys780, Cys775-Cys789, and Cys791-Cys804. The EGF-like 9; calcium-binding domain maps to 724–765 (DVDECALNSLLCDNGWCQNSPGSYSCSCPPGFHFWQDTEICK). Positions 766 to 805 (DVDECLSSPCVSGVCRNLAGSYTCKCGPGSRLDPSGTFCL) constitute an EGF-like 10; calcium-binding domain. The TB 4 domain occupies 810–861 (GTCWLKIQESRCEVNLQGASLRSECCATLGAAWGSPCERCEIDPACARGFAR). The EGF-like 11; calcium-binding domain maps to 869–910 (DVNECESFPGVCPNGRCVNTAGSFRCECPEGLMLDASGRLCV). Cystine bridges form between Cys873-Cys885, Cys880-Cys894, and Cys896-Cys909. The TB 5 domain maps to 915-966 (EPCFLRWDEDECGVTLPGKYRMDVCCCSIGAVWGVECEACPDPESLEFASLC). One can recognise an EGF-like 12; calcium-binding domain in the interval 986 to 1027 (DVNECKVFPGLCTHGTCRNTVGSFHCACAGGFALDAQERNCT). Disulfide bonds link Cys990/Cys1002, Cys997/Cys1011, Cys1013/Cys1026, Cys1032/Cys1044, Cys1039/Cys1053, Cys1055/Cys1069, Cys1075/Cys1087, Cys1082/Cys1096, Cys1098/Cys1111, Cys1117/Cys1129, Cys1124/Cys1138, Cys1140/Cys1153, Cys1159/Cys1170, Cys1166/Cys1179, Cys1181/Cys1194, Cys1200/Cys1212, Cys1207/Cys1221, Cys1223/Cys1236, Cys1242/Cys1254, Cys1249/Cys1263, Cys1265/Cys1278, Cys1284/Cys1297, Cys1291/Cys1306, Cys1308/Cys1319, Cys1325/Cys1338, Cys1332/Cys1347, Cys1349/Cys1360, Cys1366/Cys1378, Cys1373/Cys1387, Cys1389/Cys1402, Cys1408/Cys1419, Cys1414/Cys1428, Cys1430/Cys1443, Cys1449/Cys1460, Cys1455/Cys1469, and Cys1471/Cys1484. N-linked (GlcNAc...) asparagine glycosylation is present at Asn1025. Residues 1028-1070 (DIDECRISPDLCGQGTCVNTPGSFECECFPGYESGFMLMKNCM) enclose the EGF-like 13; calcium-binding domain. Positions 1071–1112 (DVDECARDPLLCRGGTCTNTDGSYKCQCPPGHELTAKGTACE) constitute an EGF-like 14; calcium-binding domain. The EGF-like 15; calcium-binding domain maps to 1113 to 1154 (DIDECSLSDGLCPHGQCVNVIGAFQCSCHAGFQSTPDRQGCV). The region spanning 1155–1195 (DINECRVQNGGCDVHCINTEGSYRCSCGQGYSLMPDGRACA) is the EGF-like 16; calcium-binding domain. The region spanning 1196 to 1237 (DVDECEENPRVCDQGHCTNMPGGHRCLCYDGFMATPDMRTCV) is the EGF-like 17 domain. The EGF-like 18; calcium-binding domain maps to 1238-1279 (DVDECDLNPHICLHGDCENTKGSFVCHCQLGYMVRKGATGCS). Positions 1280-1320 (DVDECEVGGHNCDSHASCLNIPGSFSCRCLPGWVGDGFECH) constitute an EGF-like 19; calcium-binding domain. Residues 1321–1361 (DLDECVSQEHRCSPRGDCLNVPGSYRCTCRQGFAGDGFFCE) form the EGF-like 20; calcium-binding domain. The 42-residue stretch at 1362-1403 (DRDECAENVDLCDNGQCLNAPGGYRCECEMGFDPTEDHRACQ) folds into the EGF-like 21; calcium-binding domain. The EGF-like 22; calcium-binding domain maps to 1404–1444 (DVDECAQGNLCAFGSCENLPGMFRCICNGGYELDRGGGNCT). Asn1442 carries N-linked (GlcNAc...) asparagine glycosylation. Positions 1445 to 1485 (DINECADPVNCINGVCINTPGSYLCSCPQDFELNPSGVGCV) constitute an EGF-like 23; calcium-binding domain. In terms of domain architecture, TB 6 spans 1490 to 1546 (GNCFLETHDRGDSGISCSAEIGVGVTRASCCCSLGRAWGNPCELCPMANTTEYRTLC). Residue Asn1538 is glycosylated (N-linked (GlcNAc...) asparagine). Residues 1563–1604 (DIDECQELPGLCQGGDCVNTFGSFQCECPPGYHLSEHTRICE) form the EGF-like 24; calcium-binding domain. 6 disulfides stabilise this stretch: Cys1567/Cys1579, Cys1574/Cys1588, Cys1590/Cys1603, Cys1609/Cys1621, Cys1616/Cys1630, and Cys1632/Cys1645. An EGF-like 25; calcium-binding domain is found at 1605–1646 (DIDECSTHSGICGPGTCYNTLGNYTCVCPAEYLQVNGGNNCM). N-linked (GlcNAc...) asparagine glycosylation is present at Asn1627. One can recognise a TB 7 domain in the interval 1651-1703 (SVCFRHYNGTCQNELAFNVTRKMCCCSYNIGQAWNRPCEACPTPISPDYQILC). N-linked (GlcNAc...) asparagine glycans are attached at residues Asn1658 and Asn1668. Residues 1721–1762 (DIDECGEIPAICANGICINQIGSFRCECPAGFNYNSILLACE) enclose the EGF-like 26; calcium-binding domain. Disulfide bonds link Cys1725–Cys1737, Cys1732–Cys1746, Cys1748–Cys1761, Cys1767–Cys1780, Cys1774–Cys1789, Cys1791–Cys1803, Cys1809–Cys1821, Cys1816–Cys1830, Cys1832–Cys1845, Cys1851–Cys1861, Cys1856–Cys1870, Cys1872–Cys1884, Cys1890–Cys1903, Cys1898–Cys1912, Cys1914–Cys1927, Cys1933–Cys1945, Cys1940–Cys1954, Cys1956–Cys1967, Cys1973–Cys1985, Cys1980–Cys1994, and Cys1996–Cys2009. Positions 1763-1804 (DVDECGSRESPCQQNADCINIPGSYRCKCTRGYKLSPGGACV) constitute an EGF-like 27; calcium-binding domain. The region spanning 1805–1846 (GRNECREIPNVCSHGDCMDTEGSYMCLCHRGFQASADQTLCM) is the EGF-like 28 domain. The region spanning 1847 to 1885 (DIDECDRQPCGNGTCKNIIGSYNCLCFPGFVVTHNGDCV) is the EGF-like 29; calcium-binding domain. Asn1858 is a glycosylation site (N-linked (GlcNAc...) asparagine). The EGF-like 30; calcium-binding domain maps to 1886-1928 (DFDECTTLVGQVCRFGHCLNTAGSFHCLCQDGFELTADGKNCV). Residues 1929–1968 (DTNECLSLAGTCLPGTCQNLEGSFRCICPPGFQVQSDHCI) form the EGF-like 31; calcium-binding domain. The EGF-like 32; calcium-binding domain maps to 1969–2010 (DIDECSEEPNLCLFGTCTNSPGSFQCLCPPGFVLSDNGHRCF). The region spanning 2015–2068 (SFCFTRFEAGKCSVPKAFNTTKTRCCCSKRPGEGWGDPCELCPQEGSAAFQELC) is the TB 8 domain. Asn2033 carries N-linked (GlcNAc...) asparagine glycosylation. The region spanning 2084–2125 (DVNECAENPGVCTNGVCVNTDGSFRCECPFGYSLDFTGINCV) is the EGF-like 33; calcium-binding domain. 15 cysteine pairs are disulfide-bonded: Cys2088–Cys2100, Cys2095–Cys2109, Cys2111–Cys2124, Cys2130–Cys2141, Cys2136–Cys2150, Cys2152–Cys2164, Cys2170–Cys2181, Cys2177–Cys2190, Cys2192–Cys2205, Cys2211–Cys2225, Cys2218–Cys2234, Cys2236–Cys2250, Cys2256–Cys2268, Cys2263–Cys2277, and Cys2279–Cys2292. Residues 2126 to 2165 (DTDECSVGHPCGQGTCTNVIGGFECACADGFEPGLMMTCE) enclose the EGF-like 34; calcium-binding domain. The EGF-like 35; calcium-binding domain maps to 2166–2206 (DIDECSLNPLLCAFRCHNTEGSYLCTCPAGYTLREDGAMCR). In terms of domain architecture, EGF-like 36; calcium-binding spans 2207–2251 (DVDECADGQQDCHARGMECKNLIGTFACVCPPGMRPLPGSGEGCT). The region spanning 2252–2293 (DDNECHAQPDLCVNGRCVNTAGSFRCDCDEGFQPSPTLTECH) is the EGF-like 37; calcium-binding domain. The TB 9 domain maps to 2298–2351 (GPCFAEVLQTMCRSLSSSSEAVTRAECCCGGGRGWGPRCELCPLPGTSAYRKLC). One can recognise an EGF-like 38; calcium-binding domain in the interval 2363 to 2404 (DVDECRMLAHLCAHGECINSLGSFRCHCQAGYTPDATATTCL). Cystine bridges form between Cys2367/Cys2379, Cys2374/Cys2388, Cys2390/Cys2403, Cys2409/Cys2420, Cys2416/Cys2429, Cys2431/Cys2444, Cys2450/Cys2461, Cys2457/Cys2470, Cys2472/Cys2483, Cys2489/Cys2502, Cys2496/Cys2511, Cys2513/Cys2526, Cys2532/Cys2542, Cys2538/Cys2551, Cys2553/Cys2566, Cys2572/Cys2584, Cys2579/Cys2593, Cys2595/Cys2608, Cys2614/Cys2625, Cys2621/Cys2634, and Cys2636/Cys2648. Positions 2405–2445 (DMDECSQVPKPCTFLCKNTKGSFLCSCPRGYLLEEDGRTCK) constitute an EGF-like 39; calcium-binding domain. The EGF-like 40; calcium-binding domain occupies 2446 to 2484 (DLDECTSRQHNCQFLCVNTVGAFTCRCPPGFTQHHQACF). Residues 2485–2527 (DNDECSAQPGPCGAHGHCHNTPGSFRCECHQGFTLVSSGHGCE) form the EGF-like 41; calcium-binding domain. An EGF-like 42; calcium-binding domain is found at 2528-2567 (DVNECDGPHRCQHGCQNQLGGYRCSCPQGFTQHSQWAQCV). Residues 2568-2609 (DENECALSPPTCGSASCRNTLGGFRCVCPSGFDFDQALGGCQ) enclose the EGF-like 43; calcium-binding domain. One can recognise an EGF-like 44; calcium-binding domain in the interval 2610–2649 (EVDECAGRRGPCSYSCANTPGGFLCGCPQGYFRAGQGHCV). N-linked (GlcNAc...) asparagine glycosylation is present at Asn2713.

It belongs to the fibrillin family. Probably forms intermolecular disulfide bonds either with other FBN3 molecules or with other components of the microfibrils. In terms of tissue distribution, predominantly expressed in connective tissues such as skeletal muscle, tendon, skin, perichondrium and periosteum. Highly expressed in fetal lung, brain, kidney. Expressed at low level in prostate, testis, mammary gland, uterus, ovary, placenta, bladder, adrenal gland, thyroid, fetal thymus, fetal liver, liver, fetal heart and heart.

The protein resides in the secreted. Its subcellular location is the extracellular space. The protein localises to the extracellular matrix. In terms of biological role, fibrillins are structural components of 10-12 nm extracellular calcium-binding microfibrils, which occur either in association with elastin or in elastin-free bundles. Fibrillin-containing microfibrils provide long-term force bearing structural support. The polypeptide is Fibrillin-3 (FBN3) (Homo sapiens (Human)).